A 546-amino-acid polypeptide reads, in one-letter code: Thermolysin (546 aa).

The first 25 residues, 1–25, serve as a signal peptide directing secretion; that stretch reads MDKRAMLGAIGLAFGLMAWPFGASA. Residues 26-228 constitute a propeptide, activation peptide; that stretch reads KEKSMVWNEQ…EAKPGGGQPV (203 aa). Ca(2+)-binding residues include Asp287, Asp289, Gln291, and Asp368. Residue His372 coordinates Zn(2+). Residue Glu373 is part of the active site. The Zn(2+) site is built by His376 and Glu396. Ca(2+) contacts are provided by Asn413, Asp415, Glu417, Glu420, Tyr423, Thr424, Ile427, and Asp430. The active-site Proton donor is the His461.

Belongs to the peptidase M4 family. It depends on Ca(2+) as a cofactor. Zn(2+) is required as a cofactor.

It is found in the secreted. It carries out the reaction Preferential cleavage: Xaa-|-Leu &gt; Xaa-|-Phe.. Functionally, extracellular zinc metalloprotease. The polypeptide is Thermolysin (npr) (Bacillus caldolyticus).